The sequence spans 91 residues: Mercuric transport protein periplasmic component (91 aa).

The N-terminal stretch at methionine 1–alanine 19 is a signal peptide. The 67-residue stretch at glutamine 22–serine 88 folds into the HMA domain. Cysteine 33 and cysteine 36 together coordinate Hg(2+).

Belongs to the MerP family. Monomer.

It localises to the periplasm. Its function is as follows. Involved in mercury resistance. Acts as a mercury scavenger that specifically binds to a mercuric ion in the periplasm and probably passes it to the cytoplasmic mercuric reductase MerA via the mercuric transport protein MerT. This chain is Mercuric transport protein periplasmic component, found in Pseudomonas aeruginosa.